The following is a 41-amino-acid chain: Large ribosomal subunit protein bL36 (41 aa).

It belongs to the bacterial ribosomal protein bL36 family.

This Rhizobium rhizogenes (strain K84 / ATCC BAA-868) (Agrobacterium radiobacter) protein is Large ribosomal subunit protein bL36.